The primary structure comprises 414 residues: Histidine--tRNA ligase (414 aa).

The protein belongs to the class-II aminoacyl-tRNA synthetase family. As to quaternary structure, homodimer.

The protein localises to the cytoplasm. It carries out the reaction tRNA(His) + L-histidine + ATP = L-histidyl-tRNA(His) + AMP + diphosphate + H(+). The polypeptide is Histidine--tRNA ligase (Solibacter usitatus (strain Ellin6076)).